A 377-amino-acid polypeptide reads, in one-letter code: MTTTMSTLPVVLVDEILARVPITSLRSLRSTCKKWEASSKTNLVGGKATARKSSHVGFILIGDKICSMKLDLNGGDDFVDTSVNQVSAFDGFAISQLFHCDGLLFCISNNHYSNYTLMVCNMYLGETRLIQNRSLFESYQNFCSYAFGYDSSKNRNHKILRNNSVSGGYEIYSLKSDSWKDLNVDLEKSIHLWRLGSVSLKGNAYFRVIKVIEEGVWEYNLLCFDFTRESFGKLLSLPFESLGDEGEGIMVISCVRDDHLAVLYQRDTLGIWISTEIEPNKVSWREFLQVDLATLDGFPDVFIAGRFIVDEEKQVVVVFGQETELDLNHGNAFIFGRDGYFTSFTVGDAPPEDFTSYVPSLVSLQIDKTGKRKARDD.

In terms of domain architecture, F-box spans 2-48 (TTTMSTLPVVLVDEILARVPITSLRSLRSTCKKWEASSKTNLVGGKA).

This chain is F-box protein At1g11810, found in Arabidopsis thaliana (Mouse-ear cress).